The chain runs to 562 residues: Formate--tetrahydrofolate ligase (562 aa).

Residue 71–78 (TPAGEGKS) participates in ATP binding.

The protein belongs to the formate--tetrahydrofolate ligase family.

It catalyses the reaction (6S)-5,6,7,8-tetrahydrofolate + formate + ATP = (6R)-10-formyltetrahydrofolate + ADP + phosphate. The protein operates within one-carbon metabolism; tetrahydrofolate interconversion. This Bacillus thuringiensis (strain Al Hakam) protein is Formate--tetrahydrofolate ligase.